Reading from the N-terminus, the 363-residue chain is MRIAISGGGTGGHIYPALAFIKEVQRRHPNVEFLYIGTENGLEKKIVERENIPFRSIEITGFKRKLSFENVKTVMRFLKGVKKSKSYLAEFKPDAVIGTGGYVCGPVVYAAAKMGIPTIVHEQNSLPGITNKFLSKYVNKVAICFEEAKSHFPSEKVVFTGNPRASEVVSIKTGRSLAEFGLSEDKKTVLIFGGSRGAAPINRAVIDMQDVLKTRDYQVLYITGEVHYEKVMNELKSKGAADNMVTKPFLHQMPEYLKAIDVIVARAGATTIAEITALGIPSVLIPSPYVTANHQEVNARSLGQHDAAIVLKETELSGEKLIEALDRIVLNEQTLKEMSERTKSLGVPDAAARLYSVLEELKK.

Residues 10-12 (TGG), asparagine 124, serine 195, and glutamine 295 each bind UDP-N-acetyl-alpha-D-glucosamine.

It belongs to the glycosyltransferase 28 family. MurG subfamily.

It is found in the cell membrane. The enzyme catalyses di-trans,octa-cis-undecaprenyl diphospho-N-acetyl-alpha-D-muramoyl-L-alanyl-D-glutamyl-meso-2,6-diaminopimeloyl-D-alanyl-D-alanine + UDP-N-acetyl-alpha-D-glucosamine = di-trans,octa-cis-undecaprenyl diphospho-[N-acetyl-alpha-D-glucosaminyl-(1-&gt;4)]-N-acetyl-alpha-D-muramoyl-L-alanyl-D-glutamyl-meso-2,6-diaminopimeloyl-D-alanyl-D-alanine + UDP + H(+). Its pathway is cell wall biogenesis; peptidoglycan biosynthesis. Functionally, cell wall formation. Catalyzes the transfer of a GlcNAc subunit on undecaprenyl-pyrophosphoryl-MurNAc-pentapeptide (lipid intermediate I) to form undecaprenyl-pyrophosphoryl-MurNAc-(pentapeptide)GlcNAc (lipid intermediate II). The sequence is that of UDP-N-acetylglucosamine--N-acetylmuramyl-(pentapeptide) pyrophosphoryl-undecaprenol N-acetylglucosamine transferase from Bacillus subtilis (strain 168).